Here is a 361-residue protein sequence, read N- to C-terminus: MPNTLTVDLGHRSYPIVFAADVRNNVRDQVAELTTAGRKVAVFTDEQVASAQVGALEAMFGSSPRLAFAPGESAKSLASFGRAMDFLAAQKVDRRGVVFAFGGGVIGDLAGFIAASWLRGIDFYQVPTTLLAMVDSSVGGKTGINIPAGKNLVGAFHQPRGVFIGTDFLRTLPAREFAAGMAEVIKYGLLGDAALLELLERAPLSFVSPELAGVIRQCCALKAAFVQADERELAPEGGRALLNLGHTFGHAIEQVTGYGVYLHGEAVAIGMCAAARLSAKLGHLGGADVARVDAVVAAHRLPVKLRTPLVLMDLLAAMARDKKVRAGMPRFVVLRKLGEAVTQDDVPAELAAECFREVGAS.

NAD(+) contacts are provided by residues 104-108 (GVIGD), 128-129 (TT), Lys-141, Lys-150, and 168-171 (FLRT). Glu-183, His-246, and His-263 together coordinate Zn(2+).

This sequence belongs to the sugar phosphate cyclases superfamily. Dehydroquinate synthase family. Co(2+) serves as cofactor. Requires Zn(2+) as cofactor. The cofactor is NAD(+).

It is found in the cytoplasm. The enzyme catalyses 7-phospho-2-dehydro-3-deoxy-D-arabino-heptonate = 3-dehydroquinate + phosphate. Its pathway is metabolic intermediate biosynthesis; chorismate biosynthesis; chorismate from D-erythrose 4-phosphate and phosphoenolpyruvate: step 2/7. Catalyzes the conversion of 3-deoxy-D-arabino-heptulosonate 7-phosphate (DAHP) to dehydroquinate (DHQ). In Opitutus terrae (strain DSM 11246 / JCM 15787 / PB90-1), this protein is 3-dehydroquinate synthase.